A 125-amino-acid polypeptide reads, in one-letter code: Subtelomeric hrmA-associated cluster protein cgnA (125 aa).

G-Q-I/R/S repeat units follow at residues G11 to I13, G14 to I16, G17 to R19, G20 to S22, G23 to R25, G26 to S28, G29 to R31, G32 to S34, G35 to I37, G38 to S40, G41 to S43, G44 to S46, G47 to S49, G50 to S52, G53 to I55, G56 to I58, G59 to I61, G62 to I64, G65 to I67, G68 to I70, G71 to I73, G74 to I76, and G77 to A79. Residues G11–A79 form a 23 X 3 AA approximate tandem repeats of G-Q-I/R/S region. The segment at P15–Q57 is disordered.

The protein resides in the secreted. Functionally, hypoxia responsive morphology factor that modulates the expression of the subtelomeric hrmA-associated cluster (HAC) containing genes that alter the hyphal surface (such as reduced total chitin or increased beta-glucan exposure) and perturb inter-hyphal interactions within the developing biofilms, resulting in a loss of vertically aligned polarized growing filaments. Consequently, this hypoxia-typic morphotype (called H-MORPH) with altered biofilm architecture leads to increased hypoxia fitness, increased host inflammation, rapid disease progression, and mortality in a murine model of invasive aspergillosis. GcnA is directly involved in the reduction total surface chitin and the increase beta-glucan exposure, and mediates the detachment of the extracellular matrix and especially of its component galactosaminogalactan (GAG). The chain is Subtelomeric hrmA-associated cluster protein cgnA from Aspergillus fumigatus (strain CBS 144.89 / FGSC A1163 / CEA10) (Neosartorya fumigata).